A 377-amino-acid chain; its full sequence is NIF3-like protein 1 (377 aa).

At Lys-109 the chain carries N6-acetyllysine. A mediates interaction with COPS2 region spans residues 244–377 (LLLYTGMGRL…ETDRDPLHVI (134 aa)). Phosphothreonine is present on Thr-255. Position 259 is a phosphoserine (Ser-259).

Belongs to the GTP cyclohydrolase I type 2/NIF3 family. In terms of assembly, homodimer. Interacts with COPS2. Interacts with THOC7.

It is found in the cytoplasm. The protein resides in the nucleus. May function as a transcriptional corepressor through its interaction with COPS2, negatively regulating the expression of genes involved in neuronal differentiation. The polypeptide is NIF3-like protein 1 (Bos taurus (Bovine)).